A 227-amino-acid polypeptide reads, in one-letter code: MAKQKQQYVTIKGTKDGLTLYLDDRCSYDDLMKEIEERLVKRSSVAANSPLVSVHLKVGNRYLTPAQEEELRALIRRSKNLVVDSIESNVISKAEAIEWVQKTEIVTVSRIVRSGQVLHVEGDLLLLGDVNPGGTVIAGGNIFILGALRGIAHAGYAGNKEAIIAASVMKPMQLRIGDVMNRAPDYKTDERNEMECAYINEHNQIVVDRLQLLMHLRPNLTRLERRM.

Belongs to the MinC family. Interacts with MinD and FtsZ.

Functionally, cell division inhibitor that blocks the formation of polar Z ring septums. Rapidly oscillates between the poles of the cell to destabilize FtsZ filaments that have formed before they mature into polar Z rings. Prevents FtsZ polymerization. The protein is Probable septum site-determining protein MinC of Geobacillus thermodenitrificans (strain NG80-2).